The following is a 66-amino-acid chain: MFTLKKPLLLLFFLGTVSLSLCEQERAADDDEGEVIEEEVKRDSMGAVKLAKLLIDKMKCEVTKAC.

Positions 1-22 are cleaved as a signal peptide; the sequence is MFTLKKPLLLLFFLGTVSLSLC. A propeptide spanning residues 23-40 is cleaved from the precursor; sequence EQERAADDDEGEVIEEEV. Cysteines 60 and 66 form a disulfide.

As to expression, expressed by the skin glands.

It localises to the secreted. Its function is as follows. Displays broad-spectrum antibacterial activity against a range of Gram-positive and Gram-negative bacteria. Also displays antifungal activity against C.albicans ATCC 2002. Has low hemolytic activity, low cytotoxicity and low antioxidant activity. The sequence is that of Jindongenin-1a from Amolops jingdongensis (Chinese torrent frog).